Consider the following 451-residue polypeptide: UDP-N-acetylmuramoylalanine--D-glutamate ligase (451 aa).

Position 118-124 (118-124 (GTKGKST)) interacts with ATP.

The protein belongs to the MurCDEF family.

Its subcellular location is the cytoplasm. It carries out the reaction UDP-N-acetyl-alpha-D-muramoyl-L-alanine + D-glutamate + ATP = UDP-N-acetyl-alpha-D-muramoyl-L-alanyl-D-glutamate + ADP + phosphate + H(+). The protein operates within cell wall biogenesis; peptidoglycan biosynthesis. Functionally, cell wall formation. Catalyzes the addition of glutamate to the nucleotide precursor UDP-N-acetylmuramoyl-L-alanine (UMA). This is UDP-N-acetylmuramoylalanine--D-glutamate ligase from Borreliella afzelii (strain PKo) (Borrelia afzelii).